The chain runs to 505 residues: Sodium-coupled neutral amino acid transporter 3 (505 aa).

The tract at residues 27-48 (VPTTDTQRTEDTQHCGEGKGFL) is disordered. The segment covering 33-43 (QRTEDTQHCGE) has biased composition (basic and acidic residues). An N-linked (GlcNAc...) asparagine glycan is attached at N73. 5 consecutive transmembrane segments (helical) span residues 82 to 102 (GILG…LFLL), 105 to 125 (VALL…IVGI), 143 to 163 (AAAL…LYII), 186 to 206 (MDGN…LALM), and 212 to 232 (LGYS…AVIY). A disulfide bridge links C239 with C276. N247 and N251 each carry an N-linked (GlcNAc...) asparagine glycan. A helical transmembrane segment spans residues 288–308 (AYTIPIMAFAFVCHPEVLPIY). An N-linked (GlcNAc...) asparagine glycan is attached at N324. Helical transmembrane passes span 325-345 (LSIA…YLTF), 367-387 (ILCV…IVLF), 409-429 (VLIA…APNI), 432-452 (IFGI…PAIF), and 472-492 (ALCF…FIII).

The protein belongs to the amino acid/polyamine transporter 2 family. In terms of tissue distribution, expressed predominantly in liver, moderately expressed in kidney and brain, and barely detectable in heart and muscle. Within liver, expressed in hepatocytes. Not detected in testis. Expressed in cells of the ganglion cell layer, in soma of some cells of the inner nuclear layer (at protein level). Expressed in the inner segments of photoreceptor cells.

The protein resides in the cell membrane. Its subcellular location is the basolateral cell membrane. It catalyses the reaction L-histidine(out) + Na(+)(out) + H(+)(in) = L-histidine(in) + Na(+)(in) + H(+)(out). The enzyme catalyses L-glutamine(out) + Na(+)(out) + H(+)(in) = L-glutamine(in) + Na(+)(in) + H(+)(out). The catalysed reaction is L-asparagine(out) + Na(+)(out) + H(+)(in) = L-asparagine(in) + Na(+)(in) + H(+)(out). In terms of biological role, symporter that cotransports specific neutral amino acids and sodium ions, coupled to an H(+) antiporter activity. Mainly participates in the glutamate-GABA-glutamine cycle in brain where it transports L-glutamine from astrocytes in the intercellular space for the replenishment of both neurotransmitters glutamate and gamma-aminobutyric acid (GABA) in neurons and also functions as the major influx transporter in ganglion cells mediating the uptake of glutamine. The transport activity is specific for L-glutamine, L-histidine and L-asparagine. The transport is electroneutral coupled to the cotransport of 1 Na(+) and the antiport of 1 H(+). The transport is pH dependent, saturable, Li(+) tolerant and functions in both direction depending on the concentration gradients of its substrates and cotransported ions. Also mediates an amino acid-gated H(+) conductance that is not stoichiometrically coupled to the amino acid transport but which influences the ionic gradients that drive the amino acid transport. In addition, may play a role in nitrogen metabolism, amino acid homeostasis, glucose metabolism and renal ammoniagenesis. The chain is Sodium-coupled neutral amino acid transporter 3 from Mus musculus (Mouse).